The following is a 450-amino-acid chain: UDP-N-acetylmuramoylalanine--D-glutamate ligase (450 aa).

115 to 121 (GTNGKST) is an ATP binding site.

This sequence belongs to the MurCDEF family.

The protein localises to the cytoplasm. It carries out the reaction UDP-N-acetyl-alpha-D-muramoyl-L-alanine + D-glutamate + ATP = UDP-N-acetyl-alpha-D-muramoyl-L-alanyl-D-glutamate + ADP + phosphate + H(+). It functions in the pathway cell wall biogenesis; peptidoglycan biosynthesis. Functionally, cell wall formation. Catalyzes the addition of glutamate to the nucleotide precursor UDP-N-acetylmuramoyl-L-alanine (UMA). In Syntrophotalea carbinolica (strain DSM 2380 / NBRC 103641 / GraBd1) (Pelobacter carbinolicus), this protein is UDP-N-acetylmuramoylalanine--D-glutamate ligase.